Reading from the N-terminus, the 1407-residue chain is DNA-directed RNA polymerase subunit beta' (1407 aa).

Zn(2+)-binding residues include C70, C72, C85, and C88. Mg(2+) is bound by residues D460, D462, and D464. 4 residues coordinate Zn(2+): C814, C888, C895, and C898. Residue K972 is modified to N6-acetyllysine.

The protein belongs to the RNA polymerase beta' chain family. In terms of assembly, the RNAP catalytic core consists of 2 alpha, 1 beta, 1 beta' and 1 omega subunit. When a sigma factor is associated with the core the holoenzyme is formed, which can initiate transcription. Requires Mg(2+) as cofactor. It depends on Zn(2+) as a cofactor.

It carries out the reaction RNA(n) + a ribonucleoside 5'-triphosphate = RNA(n+1) + diphosphate. DNA-dependent RNA polymerase catalyzes the transcription of DNA into RNA using the four ribonucleoside triphosphates as substrates. This chain is DNA-directed RNA polymerase subunit beta', found in Shigella boydii serotype 18 (strain CDC 3083-94 / BS512).